Reading from the N-terminus, the 239-residue chain is Protein GrpE (239 aa).

2 disordered regions span residues 1–56 (MIEN…KNTI) and 208–239 (SMGP…SEDV). The segment covering 40-53 (TSQKKEAINTEELK) has biased composition (basic and acidic residues). Acidic residues predominate over residues 224–239 (TVEEDVNSEVNTSEDV).

This sequence belongs to the GrpE family. Homodimer.

It localises to the cytoplasm. Functionally, participates actively in the response to hyperosmotic and heat shock by preventing the aggregation of stress-denatured proteins, in association with DnaK and GrpE. It is the nucleotide exchange factor for DnaK and may function as a thermosensor. Unfolded proteins bind initially to DnaJ; upon interaction with the DnaJ-bound protein, DnaK hydrolyzes its bound ATP, resulting in the formation of a stable complex. GrpE releases ADP from DnaK; ATP binding to DnaK triggers the release of the substrate protein, thus completing the reaction cycle. Several rounds of ATP-dependent interactions between DnaJ, DnaK and GrpE are required for fully efficient folding. The chain is Protein GrpE from Prochlorococcus marinus (strain MIT 9215).